The chain runs to 212 residues: Peptide methionine sulfoxide reductase MsrA (212 aa).

The active site involves Cys51.

The protein belongs to the MsrA Met sulfoxide reductase family.

It catalyses the reaction L-methionyl-[protein] + [thioredoxin]-disulfide + H2O = L-methionyl-(S)-S-oxide-[protein] + [thioredoxin]-dithiol. It carries out the reaction [thioredoxin]-disulfide + L-methionine + H2O = L-methionine (S)-S-oxide + [thioredoxin]-dithiol. Functionally, has an important function as a repair enzyme for proteins that have been inactivated by oxidation. Catalyzes the reversible oxidation-reduction of methionine sulfoxide in proteins to methionine. In Vibrio parahaemolyticus serotype O3:K6 (strain RIMD 2210633), this protein is Peptide methionine sulfoxide reductase MsrA.